The primary structure comprises 291 residues: Polyamine aminopropyltransferase (291 aa).

The region spanning 5-245 (PGPIVLMEPL…YAVNFVLGSL (241 aa)) is the PABS domain. Glutamine 36 provides a ligand contact to S-methyl-5'-thioadenosine. 2 residues coordinate spermidine: histidine 67 and glutamate 91. S-methyl-5'-thioadenosine is bound by residues aspartate 111 and 143-144 (DG). Aspartate 164 functions as the Proton acceptor in the catalytic mechanism.

It belongs to the spermidine/spermine synthase family. Homodimer or homotetramer.

It localises to the cytoplasm. It catalyses the reaction norspermidine + S-adenosyl 3-(methylsulfanyl)propylamine = norspermine + S-methyl-5'-thioadenosine + H(+). The enzyme catalyses S-adenosyl 3-(methylsulfanyl)propylamine + spermidine = thermospermine + S-methyl-5'-thioadenosine + H(+). Functionally, involved in the biosynthesis of polyamines which are thought to support the growth of thermophilic microorganisms under high-temperature conditions. It seems that long-chain and branched-chain of polyamines effectively stabilize DNA and RNA, respectively. Catalyzes the irreversible transfer of a propylamine group from the amino donor S-adenosylmethioninamine (decarboxy-AdoMet) to norspermidine and 1,3-diaminopropane to yield norspermine, and to spermidine to yield thermospermine. It can also synthesize thermospermine from putrescine (1,4-diaminobutane) and caldopentamine from norspermine with a very low activity. The biosynthesis of caldohexamine and caldoheptamine from caldopentamine has been also observed. This chain is Polyamine aminopropyltransferase, found in Pyrobaculum aerophilum (strain ATCC 51768 / DSM 7523 / JCM 9630 / CIP 104966 / NBRC 100827 / IM2).